A 446-amino-acid polypeptide reads, in one-letter code: Putative ankyrin repeat protein L273 (446 aa).

6 ANK repeats span residues 71-100 (NGEF…KSNM), 124-153 (DHNK…RMRP), 206-237 (TDIE…KILM), 245-277 (VWVS…KMHV), 303-332 (ELEY…NSYY), and 365-394 (YTDI…QQII).

The sequence is that of Putative ankyrin repeat protein L273 from Acanthamoeba polyphaga (Amoeba).